The following is a 309-amino-acid chain: Thiamine-monophosphate kinase (309 aa).

The Mg(2+) site is built by aspartate 41 and aspartate 55. Histidine 62 contributes to the substrate binding site. Mg(2+) contacts are provided by aspartate 83, aspartate 128, and aspartate 215. 127-128 (GD) is an ATP binding site. Serine 217 is an ATP binding site. Aspartate 218 contacts Mg(2+). Glutamate 268 is a binding site for substrate.

The protein belongs to the thiamine-monophosphate kinase family.

It carries out the reaction thiamine phosphate + ATP = thiamine diphosphate + ADP. Its pathway is cofactor biosynthesis; thiamine diphosphate biosynthesis; thiamine diphosphate from thiamine phosphate: step 1/1. Its function is as follows. Catalyzes the ATP-dependent phosphorylation of thiamine-monophosphate (TMP) to form thiamine-pyrophosphate (TPP), the active form of vitamin B1. This Methanopyrus kandleri (strain AV19 / DSM 6324 / JCM 9639 / NBRC 100938) protein is Thiamine-monophosphate kinase.